Here is a 629-residue protein sequence, read N- to C-terminus: tRNA uridine 5-carboxymethylaminomethyl modification enzyme MnmG (629 aa).

An FAD-binding site is contributed by 13–18; the sequence is GGGHAG. NAD(+) is bound at residue 273-287; the sequence is GPRYCPSIEDKIVRF.

The protein belongs to the MnmG family. Homodimer. Heterotetramer of two MnmE and two MnmG subunits. FAD is required as a cofactor.

It localises to the cytoplasm. In terms of biological role, NAD-binding protein involved in the addition of a carboxymethylaminomethyl (cmnm) group at the wobble position (U34) of certain tRNAs, forming tRNA-cmnm(5)s(2)U34. The protein is tRNA uridine 5-carboxymethylaminomethyl modification enzyme MnmG of Pseudoalteromonas translucida (strain TAC 125).